A 396-amino-acid chain; its full sequence is Phosphoglycerate kinase (396 aa).

Substrate contacts are provided by residues 22–24 (DLN), arginine 37, 60–63 (HFGR), arginine 118, and arginine 151. ATP-binding positions include lysine 201, glutamate 323, and 353-356 (GGDT).

This sequence belongs to the phosphoglycerate kinase family. In terms of assembly, monomer.

It localises to the cytoplasm. It catalyses the reaction (2R)-3-phosphoglycerate + ATP = (2R)-3-phospho-glyceroyl phosphate + ADP. It participates in carbohydrate degradation; glycolysis; pyruvate from D-glyceraldehyde 3-phosphate: step 2/5. The polypeptide is Phosphoglycerate kinase (Azorhizobium caulinodans (strain ATCC 43989 / DSM 5975 / JCM 20966 / LMG 6465 / NBRC 14845 / NCIMB 13405 / ORS 571)).